Reading from the N-terminus, the 493-residue chain is Keratin, type II cuticular Hb3 (493 aa).

The head stretch occupies residues 1 to 111 (MTCGFSTVGS…PNAQCVKQEE (111 aa)). The region spanning 111 to 422 (EKEQIKCLNN…RLLEGEEQRL (312 aa)) is the IF rod domain. A coil 1A region spans residues 112–146 (KEQIKCLNNRFAAFIDKVRFLEQQNKLLETKLQFY). Residues 147–156 (QNRQCCESNL) form a linker 1 region. The segment at 157 to 257 (EPLFEGYIET…YEEEIRVLQA (101 aa)) is coil 1B. A Glycyl lysine isopeptide (Lys-Gly) (interchain with G-Cter in SUMO1) cross-link involves residue lysine 217. The interval 258–274 (NISDTSVIVKMDNSRGL) is linker 12. The segment at 275-418 (NMDNIVAEIK…ATYRRLLEGE (144 aa)) is coil 2. Positions 419 to 493 (EQRLCEGVGA…GGGSCSLGRC (75 aa)) are tail.

The protein belongs to the intermediate filament family. Heterotetramer of two type I and two type II keratins.

The chain is Keratin, type II cuticular Hb3 from Bos taurus (Bovine).